The primary structure comprises 313 residues: Probable cell division protein WhiA (313 aa).

Positions 276–309 form a DNA-binding region, H-T-H motif; it reads SLKELGEMLHPKLGKSGVNHRLRKLDEIAERIRK.

Belongs to the WhiA family.

In terms of biological role, involved in cell division and chromosome segregation. The protein is Probable cell division protein WhiA of Ruminiclostridium cellulolyticum (strain ATCC 35319 / DSM 5812 / JCM 6584 / H10) (Clostridium cellulolyticum).